Reading from the N-terminus, the 181-residue chain is Ribosome maturation factor RimM (181 aa).

Positions 97 to 170 (AGEFWLPDLM…RIEVVAIPGL (74 aa)) constitute a PRC barrel domain.

This sequence belongs to the RimM family. In terms of assembly, binds ribosomal protein uS19.

The protein resides in the cytoplasm. An accessory protein needed during the final step in the assembly of 30S ribosomal subunit, possibly for assembly of the head region. Essential for efficient processing of 16S rRNA. May be needed both before and after RbfA during the maturation of 16S rRNA. It has affinity for free ribosomal 30S subunits but not for 70S ribosomes. The sequence is that of Ribosome maturation factor RimM from Gloeobacter violaceus (strain ATCC 29082 / PCC 7421).